We begin with the raw amino-acid sequence, 118 residues long: Holo-[acyl-carrier-protein] synthase (118 aa).

Mg(2+) is bound by residues Asp-5 and Glu-50.

It belongs to the P-Pant transferase superfamily. AcpS family. Requires Mg(2+) as cofactor.

The protein resides in the cytoplasm. It catalyses the reaction apo-[ACP] + CoA = holo-[ACP] + adenosine 3',5'-bisphosphate + H(+). Its function is as follows. Transfers the 4'-phosphopantetheine moiety from coenzyme A to a Ser of acyl-carrier-protein. This Wolinella succinogenes (strain ATCC 29543 / DSM 1740 / CCUG 13145 / JCM 31913 / LMG 7466 / NCTC 11488 / FDC 602W) (Vibrio succinogenes) protein is Holo-[acyl-carrier-protein] synthase.